The primary structure comprises 307 residues: MTKTEHRCGWVALLGPPNAGKSTLLNSALGHKVAIVTPRAQTTRNQIVGILSEPDAQVIFMDTPGIHQQRGRMNKILLQTAWQSMHSADVILVMLDADLYIKKPDFLENDVKPLMDAVAAEERPVIVAVNKVDLFRDKSKMLPLFIELQKLWPKAEVFPVSALKRDGLPELVKLVKSKLPVAPALYPEDQLSTLPVRFMAAEIVREKLFLALRQELPYSVAVEIEKWDEEEGRDLVTIHAVIYVGRPSHKSMVIGKAGATIKDIGTKARVDIQDLLEKKVHLELWVKVREGWTEDVGFLRSLGLADE.

The Era-type G domain occupies 7–181 (RCGWVALLGP…VKLVKSKLPV (175 aa)). A G1 region spans residues 15-22 (GPPNAGKS). 15–22 (GPPNAGKS) is a binding site for GTP. A G2 region spans residues 41-45 (QTTRN). Residues 62 to 65 (DTPG) are G3. GTP is bound by residues 62 to 66 (DTPGI) and 130 to 133 (NKVD). Residues 130 to 133 (NKVD) form a G4 region. A G5 region spans residues 160–162 (VSA). The KH type-2 domain maps to 212–290 (LRQELPYSVA…HLELWVKVRE (79 aa)).

It belongs to the TRAFAC class TrmE-Era-EngA-EngB-Septin-like GTPase superfamily. Era GTPase family. As to quaternary structure, monomer.

It is found in the cytoplasm. It localises to the cell inner membrane. An essential GTPase that binds both GDP and GTP, with rapid nucleotide exchange. Plays a role in 16S rRNA processing and 30S ribosomal subunit biogenesis and possibly also in cell cycle regulation and energy metabolism. This is GTPase Era from Nitratidesulfovibrio vulgaris (strain DSM 19637 / Miyazaki F) (Desulfovibrio vulgaris).